The primary structure comprises 100 residues: Small ribosomal subunit protein uS14 (100 aa).

This sequence belongs to the universal ribosomal protein uS14 family. Part of the 30S ribosomal subunit. Contacts proteins S3 and S10.

In terms of biological role, binds 16S rRNA, required for the assembly of 30S particles and may also be responsible for determining the conformation of the 16S rRNA at the A site. The chain is Small ribosomal subunit protein uS14 from Prochlorococcus marinus subsp. pastoris (strain CCMP1986 / NIES-2087 / MED4).